We begin with the raw amino-acid sequence, 1373 residues long: DNA-directed RNA polymerase subunit beta (1373 aa).

The protein belongs to the RNA polymerase beta chain family. In terms of assembly, the RNAP catalytic core consists of 2 alpha, 1 beta, 1 beta' and 1 omega subunit. When a sigma factor is associated with the core the holoenzyme is formed, which can initiate transcription.

It catalyses the reaction RNA(n) + a ribonucleoside 5'-triphosphate = RNA(n+1) + diphosphate. In terms of biological role, DNA-dependent RNA polymerase catalyzes the transcription of DNA into RNA using the four ribonucleoside triphosphates as substrates. The polypeptide is DNA-directed RNA polymerase subunit beta (Lawsonia intracellularis (strain PHE/MN1-00)).